The primary structure comprises 64 residues: Large ribosomal subunit protein uL30 (64 aa).

This sequence belongs to the universal ribosomal protein uL30 family. Part of the 50S ribosomal subunit.

The chain is Large ribosomal subunit protein uL30 from Methylorubrum populi (strain ATCC BAA-705 / NCIMB 13946 / BJ001) (Methylobacterium populi).